We begin with the raw amino-acid sequence, 376 residues long: Dual-specificity RNA methyltransferase RlmN (376 aa).

The Proton acceptor role is filled by Glu95. The Radical SAM core domain maps to 101-339 (EKERATLCVS…CIVRRPRGDD (239 aa)). Cys108 and Cys344 are oxidised to a cystine. [4Fe-4S] cluster contacts are provided by Cys115, Cys119, and Cys122. S-adenosyl-L-methionine is bound by residues 169-170 (GE), Ser201, 223-225 (SLH), and Asn301. Cys344 acts as the S-methylcysteine intermediate in catalysis.

It belongs to the radical SAM superfamily. RlmN family. [4Fe-4S] cluster is required as a cofactor.

It localises to the cytoplasm. The catalysed reaction is adenosine(2503) in 23S rRNA + 2 reduced [2Fe-2S]-[ferredoxin] + 2 S-adenosyl-L-methionine = 2-methyladenosine(2503) in 23S rRNA + 5'-deoxyadenosine + L-methionine + 2 oxidized [2Fe-2S]-[ferredoxin] + S-adenosyl-L-homocysteine. It carries out the reaction adenosine(37) in tRNA + 2 reduced [2Fe-2S]-[ferredoxin] + 2 S-adenosyl-L-methionine = 2-methyladenosine(37) in tRNA + 5'-deoxyadenosine + L-methionine + 2 oxidized [2Fe-2S]-[ferredoxin] + S-adenosyl-L-homocysteine. Functionally, specifically methylates position 2 of adenine 2503 in 23S rRNA and position 2 of adenine 37 in tRNAs. m2A2503 modification seems to play a crucial role in the proofreading step occurring at the peptidyl transferase center and thus would serve to optimize ribosomal fidelity. The polypeptide is Dual-specificity RNA methyltransferase RlmN (Pseudoalteromonas translucida (strain TAC 125)).